The following is a 280-amino-acid chain: Probable inactive shikimate kinase like 1, chloroplastic (280 aa).

Residues 1-54 (MEIFSASASLTLTGFVPRLLPLLSPQARTTLCKPLLSSSSTRLISCHSRIAPSR) constitute a chloroplast transit peptide.

This sequence belongs to the shikimate kinase family.

It is found in the plastid. Its subcellular location is the chloroplast. Functionally, required for chloroplast biogenesis. This Arabidopsis thaliana (Mouse-ear cress) protein is Probable inactive shikimate kinase like 1, chloroplastic (SKL1).